Here is a 446-residue protein sequence, read N- to C-terminus: Protein dyf-7 (446 aa).

Residues Met-1–Ala-24 form the signal peptide. The ZP domain occupies Asp-35–Ser-295. A disulfide bridge links Cys-211 with Cys-273. The helical transmembrane segment at Ile-377–Ile-397 threads the bilayer.

As to quaternary structure, monomer under reducing conditions. Homodimer under non-reducing conditions. May also form higher order oligomers. Proteolytically cleaved and secreted in vitro. As to expression, in the embryo, expressed in the excretory cell and, during dendrite formation, in the non-neuronal cells surrounding the sensory neurons, including hypodermal cells.

It is found in the cell membrane. The protein resides in the cell projection. The protein localises to the dendrite. It localises to the secreted. Functionally, required for permeability of amphid and phasmid neurons to external dyes, chemotaxis to ammonium chloride, avoidance of high osmotic stimuli, male mating and dauer formation. Along with dex-1, enables neurite growth and maintenance by anchoring amphid dendritic tips during neuron cell body migration in embryonic and larval development. The polypeptide is Protein dyf-7 (Caenorhabditis elegans).